A 513-amino-acid polypeptide reads, in one-letter code: ATP synthase subunit alpha 1 (513 aa).

An ATP-binding site is contributed by 169–176 (GDRQCGKT).

The protein belongs to the ATPase alpha/beta chains family. As to quaternary structure, F-type ATPases have 2 components, CF(1) - the catalytic core - and CF(0) - the membrane proton channel. CF(1) has five subunits: alpha(3), beta(3), gamma(1), delta(1), epsilon(1). CF(0) has three main subunits: a(1), b(2) and c(9-12). The alpha and beta chains form an alternating ring which encloses part of the gamma chain. CF(1) is attached to CF(0) by a central stalk formed by the gamma and epsilon chains, while a peripheral stalk is formed by the delta and b chains.

It localises to the cell inner membrane. The enzyme catalyses ATP + H2O + 4 H(+)(in) = ADP + phosphate + 5 H(+)(out). Functionally, produces ATP from ADP in the presence of a proton gradient across the membrane. The alpha chain is a regulatory subunit. This is ATP synthase subunit alpha 1 from Burkholderia thailandensis (strain ATCC 700388 / DSM 13276 / CCUG 48851 / CIP 106301 / E264).